The sequence spans 573 residues: DNA ligase (573 aa).

Glu-250 serves as a coordination point for ATP. The active-site N6-AMP-lysine intermediate is Lys-252. Residues Arg-257, Arg-272, Glu-301, Phe-342, Arg-432, and Lys-438 each coordinate ATP.

The protein belongs to the ATP-dependent DNA ligase family. It depends on Mg(2+) as a cofactor.

It catalyses the reaction ATP + (deoxyribonucleotide)n-3'-hydroxyl + 5'-phospho-(deoxyribonucleotide)m = (deoxyribonucleotide)n+m + AMP + diphosphate.. Functionally, DNA ligase that seals nicks in double-stranded DNA during DNA replication, DNA recombination and DNA repair. The chain is DNA ligase from Methanococcus maripaludis (strain DSM 14266 / JCM 13030 / NBRC 101832 / S2 / LL).